A 485-amino-acid chain; its full sequence is Leukocyte receptor cluster member 9 (485 aa).

A C3H1-type zinc finger spans residues 8–35; it reads SEAPAVCRFFLEGRCRFGARCRQPHPGA. The segment at 212–247 is disordered; sequence ETRTGLDSSLETPEVDGPTKETGLNGTTELEMPDPS.

The sequence is that of Leukocyte receptor cluster member 9 (Leng9) from Mus musculus (Mouse).